Here is a 458-residue protein sequence, read N- to C-terminus: UDP-N-acetylglucosamine 1-carboxyvinyltransferase (458 aa).

34–35 contributes to the phosphoenolpyruvate binding site; that stretch reads KN. Residue Arg104 coordinates UDP-N-acetyl-alpha-D-glucosamine. Cys128 serves as the catalytic Proton donor. Cys128 carries the post-translational modification 2-(S-cysteinyl)pyruvic acid O-phosphothioketal. The UDP-N-acetyl-alpha-D-glucosamine site is built by Asp320 and Val342.

It belongs to the EPSP synthase family. MurA subfamily.

It is found in the cytoplasm. It carries out the reaction phosphoenolpyruvate + UDP-N-acetyl-alpha-D-glucosamine = UDP-N-acetyl-3-O-(1-carboxyvinyl)-alpha-D-glucosamine + phosphate. Its pathway is cell wall biogenesis; peptidoglycan biosynthesis. Functionally, cell wall formation. Adds enolpyruvyl to UDP-N-acetylglucosamine. In Prochlorococcus marinus (strain NATL2A), this protein is UDP-N-acetylglucosamine 1-carboxyvinyltransferase.